The chain runs to 93 residues: Large ribosomal subunit protein bL27 (93 aa).

Positions M1–F9 are excised as a propeptide.

This sequence belongs to the bacterial ribosomal protein bL27 family. The N-terminus is cleaved by ribosomal processing cysteine protease Prp.

This is Large ribosomal subunit protein bL27 from Ruminiclostridium cellulolyticum (strain ATCC 35319 / DSM 5812 / JCM 6584 / H10) (Clostridium cellulolyticum).